A 600-amino-acid polypeptide reads, in one-letter code: Melanophilin (600 aa).

Positions 4-124 constitute a RabBD domain; it reads KLDLSKLTDE…IGSLEWYYEH (121 aa). The segment at 64-107 adopts an FYVE-type zinc-finger fold; sequence CARCLQPYQLLVNSKRQCLECGLFTCKSCGRVHPEEQGWICDPC. Disordered regions lie at residues 146 to 277, 390 to 465, 499 to 541, and 553 to 600; these read QGGA…AELC, EELT…LSEL, TVKP…AKAM, and NSLK…AHQS. Composition is skewed to basic and acidic residues over residues 232 to 243 and 409 to 420; these read CSEKAAPHKAEG and KDEKAEPNRDKS. A coiled-coil region spans residues 373-496; the sequence is GVRTEADVEE…ESRIAALRAA (124 aa). The segment covering 558–569 has biased composition (basic and acidic residues); that stretch reads QGKDDDSFDRKS.

Binds RAB27A that has been activated by GTP-binding via its N-terminus. Binds MYO5A via its C-terminal coiled coil domain.

It is found in the cytoplasm. Functionally, rab effector protein involved in melanosome transport. Serves as link between melanosome-bound RAB27A and the motor protein MYO5A. The protein is Melanophilin (MLPH) of Homo sapiens (Human).